Here is a 503-residue protein sequence, read N- to C-terminus: Aspartyl/glutamyl-tRNA(Asn/Gln) amidotransferase subunit B (503 aa).

Belongs to the GatB/GatE family. GatB subfamily. In terms of assembly, heterotrimer of A, B and C subunits.

The enzyme catalyses L-glutamyl-tRNA(Gln) + L-glutamine + ATP + H2O = L-glutaminyl-tRNA(Gln) + L-glutamate + ADP + phosphate + H(+). The catalysed reaction is L-aspartyl-tRNA(Asn) + L-glutamine + ATP + H2O = L-asparaginyl-tRNA(Asn) + L-glutamate + ADP + phosphate + 2 H(+). Its function is as follows. Allows the formation of correctly charged Asn-tRNA(Asn) or Gln-tRNA(Gln) through the transamidation of misacylated Asp-tRNA(Asn) or Glu-tRNA(Gln) in organisms which lack either or both of asparaginyl-tRNA or glutaminyl-tRNA synthetases. The reaction takes place in the presence of glutamine and ATP through an activated phospho-Asp-tRNA(Asn) or phospho-Glu-tRNA(Gln). This is Aspartyl/glutamyl-tRNA(Asn/Gln) amidotransferase subunit B from Cereibacter sphaeroides (strain ATCC 17023 / DSM 158 / JCM 6121 / CCUG 31486 / LMG 2827 / NBRC 12203 / NCIMB 8253 / ATH 2.4.1.) (Rhodobacter sphaeroides).